The chain runs to 251 residues: Gamma-glutamyl peptidase 4 (251 aa).

The 198-residue stretch at 16–213 folds into the Glutamine amidotransferase type-1 domain; that stretch reads SEFAKKTYGG…IDRVLAGGHI (198 aa). C100 serves as the catalytic Nucleophile. Catalysis depends on residues H192 and E194.

Belongs to the peptidase C26 family.

It is found in the cytoplasm. Its subcellular location is the cytosol. It functions in the pathway secondary metabolite biosynthesis. Involved in glucosinolate biosynthesis. Hydrolyzes the gamma-glutamyl peptide bond of several glutathione (GSH) conjugates to produce Cys-Gly conjugates related to glucosinolates. The gamma-Glu-Cys-Gly-GSH conjugates are the sulfur-donating molecule in glucosinolate biosynthesis. The sequence is that of Gamma-glutamyl peptidase 4 from Arabidopsis thaliana (Mouse-ear cress).